The chain runs to 112 residues: Peptidyl-prolyl cis-trans isomerase FKBP12 (112 aa).

Positions 1 to 26 are disordered; the sequence is MGVEKQVIRPGNGPKPAPGQTVTVHC. A PPIase FKBP-type domain is found at 19–112; that stretch reads GQTVTVHCTG…DFEIEVLSVQ (94 aa). Cys-26 and Cys-80 are oxidised to a cystine.

The protein belongs to the FKBP-type PPIase family. In terms of assembly, interacts with FIP37 and with the immunosuppressive drug FK506. Its interaction with FIP37 is inhibited by FK506. Interacts with TOR in a rapamycin-dependent manner.

The protein resides in the cytoplasm. It carries out the reaction [protein]-peptidylproline (omega=180) = [protein]-peptidylproline (omega=0). In terms of biological role, PPIases accelerate the folding of proteins. It catalyzes the cis-trans isomerization of proline imidic peptide bonds in oligopeptides. Mediates rapamycin inactivation of TOR protein kinase activity. This Arabidopsis thaliana (Mouse-ear cress) protein is Peptidyl-prolyl cis-trans isomerase FKBP12 (FKBP12).